A 111-amino-acid chain; its full sequence is Putative pterin-4-alpha-carbinolamine dehydratase (111 aa).

The protein belongs to the pterin-4-alpha-carbinolamine dehydratase family.

It carries out the reaction (4aS,6R)-4a-hydroxy-L-erythro-5,6,7,8-tetrahydrobiopterin = (6R)-L-erythro-6,7-dihydrobiopterin + H2O. This is Putative pterin-4-alpha-carbinolamine dehydratase from Marinobacter nauticus (strain ATCC 700491 / DSM 11845 / VT8) (Marinobacter aquaeolei).